Consider the following 142-residue polypeptide: MAIIIGSDEAGKRLKEVIKSYLLDNKYDVVDVTEGQEVDFVDATLAVAKDVQSQEGNLGIVIDAFGAGSFMVATKIKGMIAAEVSDERSGYMTRGHNNSRMITMGSEIVGDTLAKNVVKGFVEGKYDGGRHQIRVDMLNKMC.

It belongs to the LacAB/RpiB family. As to quaternary structure, heteromultimeric protein consisting of LacA and LacB.

The enzyme catalyses aldehydo-D-galactose 6-phosphate = keto-D-tagatose 6-phosphate. Its pathway is carbohydrate metabolism; D-galactose 6-phosphate degradation; D-tagatose 6-phosphate from D-galactose 6-phosphate: step 1/1. The chain is Galactose-6-phosphate isomerase subunit LacA from Staphylococcus aureus (strain JH9).